The sequence spans 427 residues: 12-alpha,13-alpha-dihydroxyfumitremorgin C prenyltransferase (427 aa).

Glutamate 94 provides a ligand contact to substrate. Positions 105, 192, 194, 268, 353, 355, 419, and 423 each coordinate dimethylallyl diphosphate.

It belongs to the tryptophan dimethylallyltransferase family.

The enzyme catalyses 12alpha,13alpha-dihydroxyfumitremorgin C + dimethylallyl diphosphate = fumitremorgin B + diphosphate. It functions in the pathway mycotoxin biosynthesis. Its function is as follows. 12-alpha,13-alpha-dihydroxyfumitremorgin C prenyltransferase; part of the gene cluster that mediates the biosynthesis of fumitremorgins, indole alkaloids that carry not only intriguing chemical structures, but also interesting biological and pharmacological activities. The biosynthesis of fumitremorgin-type alkaloids begins by condensation of the two amino acids L-tryptophan and L-proline to brevianamide F, catalyzed by the non-ribosomal peptide synthetase ftmA. Brevianamide F is then prenylated by the prenyltransferase ftmPT1/ftmB in the presence of dimethylallyl diphosphate, resulting in the formation of tryprostatin B. The three cytochrome P450 monooxygenases, ftmP450-1/ftmC, ftmP450-2/ftmE and ftmP450-3/FtmG, are responsible for the conversion of tryprostatin B to 6-hydroxytryprostatin B, tryprostatin A to fumitremorgin C and fumitremorgin C to 12,13-dihydroxyfumitremorgin C, respectively. The putative methyltransferase ftmMT/ftmD is expected for the conversion of 6-hydroxytryprostatin B to tryprostatin A. FtmPT2/FtmH catalyzes the prenylation of 12,13-dihydroxyfumitre-morgin C in the presence of dimethylallyl diphosphate, resulting in the formation of fumitremorgin B. Fumitremorgin B is further converted to verruculogen by ftmOx1/ftmF via the insertion of an endoperoxide bond between the two prenyl moieties. In some fungal species, verruculogen is further converted to fumitremorgin A, but the enzymes involved in this step have not been identified yet. This Aspergillus fumigatus (Neosartorya fumigata) protein is 12-alpha,13-alpha-dihydroxyfumitremorgin C prenyltransferase.